The sequence spans 373 residues: Ribosomal RNA small subunit methyltransferase H (373 aa).

Residues 92-94 (GGH), D111, Y138, D159, and Q166 contribute to the S-adenosyl-L-methionine site. Composition is skewed to basic and acidic residues over residues 343 to 355 (AERA…ERNP) and 363 to 373 (RALEKVGGRGS). A disordered region spans residues 343-373 (AERADEQEIERNPRSAPVRLRALEKVGGRGS).

This sequence belongs to the methyltransferase superfamily. RsmH family.

It localises to the cytoplasm. The catalysed reaction is cytidine(1402) in 16S rRNA + S-adenosyl-L-methionine = N(4)-methylcytidine(1402) in 16S rRNA + S-adenosyl-L-homocysteine + H(+). Specifically methylates the N4 position of cytidine in position 1402 (C1402) of 16S rRNA. The polypeptide is Ribosomal RNA small subunit methyltransferase H (Mycolicibacterium smegmatis (strain ATCC 700084 / mc(2)155) (Mycobacterium smegmatis)).